The following is a 339-amino-acid chain: MEPIHNPPPQTCSYSRPSTTYTSFKDASCGTKVTRIIIALFLIVISCGLILCAYTFRDLLDADYSAQEGPQQATKLLQQLDKVLTGPPLPIWDNEHLFQFSCLMQNKHRRVLPIDICNPLTKFNFLEYICNCLMTKQSVNVNETDMCELFCPPTCTPENYRRLLCTSSVFPFVMWHDPSADTQEAMLTKMDQTMSSGRVGNSHWVLVIVDIEHRCVTFFDSFYDYIASPQQMREQLEGLAASLGAIYPKEGGADSDQEELLSPFQVRIGSTVKVQSPGEFTCGAWCCQFLAWYLENPDFDLEEKVPTNPSERRALLADFISTTEQAMSRYSSLSWPTTD.

A helical membrane pass occupies residues 36–56 (IIIALFLIVISCGLILCAYTF). Catalysis depends on residues histidine 203, aspartate 220, and cysteine 282.

It belongs to the peptidase C48 family.

It localises to the secreted. The protein localises to the host cell. Its subcellular location is the membrane. Effector proteins function to alter host cell physiology and promote bacterial survival in host tissues. This protease possesses deubiquitinating and deneddylating activities. This is Deubiquitinase and deneddylase Dub2 (cdu2) from Chlamydia trachomatis serovar D (strain ATCC VR-885 / DSM 19411 / UW-3/Cx).